The primary structure comprises 227 residues: Cytidylate kinase (227 aa).

Position 12–20 (12–20) interacts with ATP; the sequence is GPSGAGKGT.

This sequence belongs to the cytidylate kinase family. Type 1 subfamily.

Its subcellular location is the cytoplasm. The enzyme catalyses CMP + ATP = CDP + ADP. The catalysed reaction is dCMP + ATP = dCDP + ADP. The sequence is that of Cytidylate kinase from Salmonella choleraesuis (strain SC-B67).